We begin with the raw amino-acid sequence, 570 residues long: GDP-Man:Man(3)GlcNAc(2)-PP-Dol alpha-1,2-mannosyltransferase (570 aa).

Residues 1–7 (MKLADFV) are Lumenal-facing. A helical membrane pass occupies residues 8 to 70 (TYVFGSLLAG…DFGWKNSSVR (63 aa)). At 71-200 (RAFILASERP…RLVESKSWPK (130 aa)) the chain is on the cytoplasmic side. Residues 201 to 221 (FTLLGQAYGSIILSIEALTTL) constitute an intramembrane region (helical). Topologically, residues 222–446 (APDYWIDTMG…FGINAMWNEH (225 aa)) are cytoplasmic. The segment at residues 447–467 (FGIAVVEYMASGLIPLCHASA) is an intramembrane region (helical). The Cytoplasmic portion of the chain corresponds to 468 to 570 (GPLYDIVVPW…LNLTHNRMFS (103 aa)).

It belongs to the glycosyltransferase group 1 family.

The protein resides in the endoplasmic reticulum membrane. It catalyses the reaction an alpha-D-Man-(1-&gt;3)-[alpha-D-Man-(1-&gt;6)]-beta-D-Man-(1-&gt;4)-beta-D-GlcNAc-(1-&gt;4)-alpha-D-GlcNAc-diphospho-di-trans,poly-cis-dolichol + 2 GDP-alpha-D-mannose = an alpha-D-Man-(1-&gt;2)-alpha-D-Man-(1-&gt;2)-alpha-D-Man-(1-&gt;3)-[alpha-D-Man-(1-&gt;6)]-beta-D-Man-(1-&gt;4)-beta-D-GlcNAc-(1-&gt;4)-alpha-D-GlcNAc-diphospho-di-trans,poly-cis-dolichol + 2 GDP + 2 H(+). It functions in the pathway protein modification; protein glycosylation. GDP-Man:Man(3)GlcNAc(2)-PP-Dol alpha-1,2-mannosyltransferase that operates in the biosynthetic pathway of dolichol-linked oligosaccharides, the glycan precursors employed in protein asparagine (N)-glycosylation. The assembly of dolichol-linked oligosaccharides begins on the cytosolic side of the endoplasmic reticulum membrane and finishes in its lumen. The sequential addition of sugars to dolichol pyrophosphate produces dolichol-linked oligosaccharides containing fourteen sugars, including two GlcNAcs, nine mannoses and three glucoses. Once assembled, the oligosaccharide is transferred from the lipid to nascent proteins by oligosaccharyltransferases. Catalyzes, on the cytoplasmic face of the endoplasmic reticulum, the addition of the fourth and fifth mannose residues to the dolichol-linked oligosaccharide chain, to produce Man(5)GlcNAc(2)-PP-dolichol core oligosaccharide. The protein is GDP-Man:Man(3)GlcNAc(2)-PP-Dol alpha-1,2-mannosyltransferase (ALG11) of Kluyveromyces lactis (strain ATCC 8585 / CBS 2359 / DSM 70799 / NBRC 1267 / NRRL Y-1140 / WM37) (Yeast).